We begin with the raw amino-acid sequence, 525 residues long: NADH-quinone oxidoreductase subunit N (525 aa).

Transmembrane regions (helical) follow at residues 26-46 (LSPM…DAFA), 53-73 (VLQP…VVLL), 90-110 (PTLF…LLVA), 143-163 (VQTE…LFVA), 167-187 (LLVM…LCGL), 202-222 (YFLL…FAYG), 246-266 (LYLS…AAPF), 278-298 (PTPI…GALL), 314-334 (PVIW…ALTQ), 341-361 (LAYS…GSNI), 368-388 (MFYL…VSLV), 411-431 (LAGT…TSGF), 449-469 (LVVV…RVIV), and 487-507 (PTLT…LGVA).

It belongs to the complex I subunit 2 family. In terms of assembly, NDH-1 is composed of 14 different subunits. Subunits NuoA, H, J, K, L, M, N constitute the membrane sector of the complex.

The protein resides in the cell membrane. The enzyme catalyses a quinone + NADH + 5 H(+)(in) = a quinol + NAD(+) + 4 H(+)(out). Its function is as follows. NDH-1 shuttles electrons from NADH, via FMN and iron-sulfur (Fe-S) centers, to quinones in the respiratory chain. The immediate electron acceptor for the enzyme in this species is believed to be a menaquinone. Couples the redox reaction to proton translocation (for every two electrons transferred, four hydrogen ions are translocated across the cytoplasmic membrane), and thus conserves the redox energy in a proton gradient. In Parafrankia sp. (strain EAN1pec), this protein is NADH-quinone oxidoreductase subunit N.